The primary structure comprises 509 residues: Maturase K (509 aa).

This sequence belongs to the intron maturase 2 family. MatK subfamily.

The protein resides in the plastid. Its subcellular location is the chloroplast. In terms of biological role, usually encoded in the trnK tRNA gene intron. Probably assists in splicing its own and other chloroplast group II introns. This Thuja occidentalis (Northern white-cedar) protein is Maturase K.